The sequence spans 282 residues: Putative polysaccharide deacetylase YheN (282 aa).

The helical transmembrane segment at 15 to 35 threads the bilayer; the sequence is LAFKFASLAVLCVLLLLMVIL. One can recognise a NodB homology domain in the interval 85–271; it reads KTVYLTFDDG…KLKEKGYSFG (187 aa).

Belongs to the polysaccharide deacetylase family.

Its subcellular location is the cell membrane. The sequence is that of Putative polysaccharide deacetylase YheN (yheN) from Bacillus subtilis (strain 168).